We begin with the raw amino-acid sequence, 377 residues long: Succinyl-diaminopimelate desuccinylase (377 aa).

His-68 lines the Zn(2+) pocket. Asp-70 is a catalytic residue. Asp-101 is a Zn(2+) binding site. The active-site Proton acceptor is the Glu-135. 3 residues coordinate Zn(2+): Glu-136, Glu-164, and His-350.

It belongs to the peptidase M20A family. DapE subfamily. In terms of assembly, homodimer. It depends on Zn(2+) as a cofactor. Co(2+) is required as a cofactor.

It carries out the reaction N-succinyl-(2S,6S)-2,6-diaminopimelate + H2O = (2S,6S)-2,6-diaminopimelate + succinate. The protein operates within amino-acid biosynthesis; L-lysine biosynthesis via DAP pathway; LL-2,6-diaminopimelate from (S)-tetrahydrodipicolinate (succinylase route): step 3/3. Catalyzes the hydrolysis of N-succinyl-L,L-diaminopimelic acid (SDAP), forming succinate and LL-2,6-diaminopimelate (DAP), an intermediate involved in the bacterial biosynthesis of lysine and meso-diaminopimelic acid, an essential component of bacterial cell walls. This Psychromonas ingrahamii (strain DSM 17664 / CCUG 51855 / 37) protein is Succinyl-diaminopimelate desuccinylase.